We begin with the raw amino-acid sequence, 160 residues long: Cytochrome b6-f complex subunit 4 (160 aa).

3 helical membrane-spanning segments follow: residues 36–56 (LLYV…ALAV), 95–115 (LLGV…PFIE), and 131–151 (TVFL…ALPL).

The protein belongs to the cytochrome b family. PetD subfamily. The 4 large subunits of the cytochrome b6-f complex are cytochrome b6, subunit IV (17 kDa polypeptide, PetD), cytochrome f and the Rieske protein, while the 4 small subunits are PetG, PetL, PetM and PetN. The complex functions as a dimer.

Its subcellular location is the cellular thylakoid membrane. Functionally, component of the cytochrome b6-f complex, which mediates electron transfer between photosystem II (PSII) and photosystem I (PSI), cyclic electron flow around PSI, and state transitions. This is Cytochrome b6-f complex subunit 4 from Nostoc punctiforme (strain ATCC 29133 / PCC 73102).